The following is a 256-amino-acid chain: MKKAHLTVQSNSEIADRIYKMVLKGELVRHLTEPGQFLHLKVSDAVTPLLRRPLSIADVNFAADEVSVIYRADGEGTRLLAGKKEGGRIDVLGPLGNGFPVRRIEPGKTALLVGGGVGVPPLQELSKRLTEKGVNVIHVLGFQSAKDVFYEQECRAYGDTYVATADGTYGEKGFVTDVIREKQLEFDVLLSCGPTPMLKALKQQYGHKEVYLSMEERMGCGIGACFACVCRTGESDTSYVKVCLDGPVFKAEEVAL.

The region spanning 1-101 (MKKAHLTVQS…LGPLGNGFPV (101 aa)) is the FAD-binding FR-type domain. Residues 52–55 (RPLS), 69–71 (IYR), and 76–77 (GT) each bind FAD. The [2Fe-2S] cluster site is built by Cys-220, Cys-225, Cys-228, and Cys-243.

Belongs to the PyrK family. In terms of assembly, heterotetramer of 2 PyrK and 2 PyrD type B subunits. The cofactor is [2Fe-2S] cluster. FAD is required as a cofactor.

The protein operates within pyrimidine metabolism; UMP biosynthesis via de novo pathway; orotate from (S)-dihydroorotate (NAD(+) route): step 1/1. In terms of biological role, responsible for channeling the electrons from the oxidation of dihydroorotate from the FMN redox center in the PyrD type B subunit to the ultimate electron acceptor NAD(+). This is Dihydroorotate dehydrogenase B (NAD(+)), electron transfer subunit from Bacillus velezensis (strain DSM 23117 / BGSC 10A6 / LMG 26770 / FZB42) (Bacillus amyloliquefaciens subsp. plantarum).